Reading from the N-terminus, the 201-residue chain is Protein GrpE (201 aa).

The tract at residues 1–32 (MTDRDRQPEDTTAPTGEPVVSKPYIMPDDPEP) is disordered.

The protein belongs to the GrpE family. Homodimer.

The protein localises to the cytoplasm. Functionally, participates actively in the response to hyperosmotic and heat shock by preventing the aggregation of stress-denatured proteins, in association with DnaK and GrpE. It is the nucleotide exchange factor for DnaK and may function as a thermosensor. Unfolded proteins bind initially to DnaJ; upon interaction with the DnaJ-bound protein, DnaK hydrolyzes its bound ATP, resulting in the formation of a stable complex. GrpE releases ADP from DnaK; ATP binding to DnaK triggers the release of the substrate protein, thus completing the reaction cycle. Several rounds of ATP-dependent interactions between DnaJ, DnaK and GrpE are required for fully efficient folding. This is Protein GrpE from Bradyrhizobium diazoefficiens (strain JCM 10833 / BCRC 13528 / IAM 13628 / NBRC 14792 / USDA 110).